Here is a 176-residue protein sequence, read N- to C-terminus: MVKKIRIKKKIAVDELTDALAVAQSAVFTDYRGINTSELTTIRVKLREAGVGYRVLKNTLARRAADNTDHSNIKGAFEGPVAMAYSSNDVVAPARVLMDYISSSKSNLKVTGGYLSNKLISVEEVAELAKLPSREVLISKILAGMQSPITGLAMVLNGPARGLAIVLQARIKQLEG.

This sequence belongs to the universal ribosomal protein uL10 family. As to quaternary structure, part of the ribosomal stalk of the 50S ribosomal subunit. The N-terminus interacts with L11 and the large rRNA to form the base of the stalk. The C-terminus forms an elongated spine to which L12 dimers bind in a sequential fashion forming a multimeric L10(L12)X complex.

Forms part of the ribosomal stalk, playing a central role in the interaction of the ribosome with GTP-bound translation factors. This Dehalococcoides mccartyi (strain ATCC BAA-2100 / JCM 16839 / KCTC 5957 / BAV1) protein is Large ribosomal subunit protein uL10.